A 400-amino-acid polypeptide reads, in one-letter code: Formate-dependent phosphoribosylglycinamide formyltransferase (400 aa).

N(1)-(5-phospho-beta-D-ribosyl)glycinamide contacts are provided by residues 21 to 22 and Glu-81; that span reads EL. ATP is bound by residues Arg-114, Lys-155, 160-165, 195-198, and Glu-203; these read SSGKGQ and EGRI. Residues 119-313 enclose the ATP-grasp domain; it reads RLAAEKLGLP…EFELHVRAIL (195 aa). Residues Glu-272 and Glu-284 each coordinate Mg(2+). N(1)-(5-phospho-beta-D-ribosyl)glycinamide contacts are provided by residues Asp-291, Lys-360, and 367 to 368; that span reads RR.

This sequence belongs to the PurK/PurT family. As to quaternary structure, homodimer.

It carries out the reaction N(1)-(5-phospho-beta-D-ribosyl)glycinamide + formate + ATP = N(2)-formyl-N(1)-(5-phospho-beta-D-ribosyl)glycinamide + ADP + phosphate + H(+). The protein operates within purine metabolism; IMP biosynthesis via de novo pathway; N(2)-formyl-N(1)-(5-phospho-D-ribosyl)glycinamide from N(1)-(5-phospho-D-ribosyl)glycinamide (formate route): step 1/1. Functionally, involved in the de novo purine biosynthesis. Catalyzes the transfer of formate to 5-phospho-ribosyl-glycinamide (GAR), producing 5-phospho-ribosyl-N-formylglycinamide (FGAR). Formate is provided by PurU via hydrolysis of 10-formyl-tetrahydrofolate. This chain is Formate-dependent phosphoribosylglycinamide formyltransferase, found in Methylococcus capsulatus (strain ATCC 33009 / NCIMB 11132 / Bath).